The sequence spans 444 residues: Phosphoglucosamine mutase (444 aa).

Residue S101 is the Phosphoserine intermediate of the active site. Positions 101, 240, 242, and 244 each coordinate Mg(2+). A Phosphoserine modification is found at S101.

This sequence belongs to the phosphohexose mutase family. Mg(2+) is required as a cofactor. Post-translationally, activated by phosphorylation.

The enzyme catalyses alpha-D-glucosamine 1-phosphate = D-glucosamine 6-phosphate. Functionally, catalyzes the conversion of glucosamine-6-phosphate to glucosamine-1-phosphate. The chain is Phosphoglucosamine mutase from Aeromonas hydrophila subsp. hydrophila (strain ATCC 7966 / DSM 30187 / BCRC 13018 / CCUG 14551 / JCM 1027 / KCTC 2358 / NCIMB 9240 / NCTC 8049).